The following is a 77-amino-acid chain: Translation initiation factor IF-1, chloroplastic (77 aa).

Residues 1–71 (MKEQKLIHEG…TRGRIIYRLR (71 aa)) enclose the S1-like domain.

It belongs to the IF-1 family. As to quaternary structure, component of the 30S ribosomal translation pre-initiation complex which assembles on the 30S ribosome in the order IF-2 and IF-3, IF-1 and N-formylmethionyl-tRNA(fMet); mRNA recruitment can occur at any time during PIC assembly.

It is found in the plastid. Its subcellular location is the chloroplast. Functionally, one of the essential components for the initiation of protein synthesis. Stabilizes the binding of IF-2 and IF-3 on the 30S subunit to which N-formylmethionyl-tRNA(fMet) subsequently binds. Helps modulate mRNA selection, yielding the 30S pre-initiation complex (PIC). Upon addition of the 50S ribosomal subunit IF-1, IF-2 and IF-3 are released leaving the mature 70S translation initiation complex. This Calycanthus floridus var. glaucus (Eastern sweetshrub) protein is Translation initiation factor IF-1, chloroplastic.